The following is a 201-amino-acid chain: FMN-dependent NADH:quinone oxidoreductase (201 aa).

Residues Ser-10, 16–18 (SQS), 96–99 (MYNF), and 140–143 (SRGG) each bind FMN.

This sequence belongs to the azoreductase type 1 family. As to quaternary structure, homodimer. FMN is required as a cofactor.

It carries out the reaction 2 a quinone + NADH + H(+) = 2 a 1,4-benzosemiquinone + NAD(+). The catalysed reaction is N,N-dimethyl-1,4-phenylenediamine + anthranilate + 2 NAD(+) = 2-(4-dimethylaminophenyl)diazenylbenzoate + 2 NADH + 2 H(+). Functionally, quinone reductase that provides resistance to thiol-specific stress caused by electrophilic quinones. In terms of biological role, also exhibits azoreductase activity. Catalyzes the reductive cleavage of the azo bond in aromatic azo compounds to the corresponding amines. The polypeptide is FMN-dependent NADH:quinone oxidoreductase (Salmonella choleraesuis (strain SC-B67)).